Consider the following 208-residue polypeptide: Recombination protein RecR (208 aa).

The C4-type zinc finger occupies 57 to 72; it reads CALCNTLTEQEVCVTC. A Toprim domain is found at 80–187; the sequence is SKLCVVETPA…QVTRLARGVP (108 aa).

This sequence belongs to the RecR family.

Its function is as follows. May play a role in DNA repair. It seems to be involved in an RecBC-independent recombinational process of DNA repair. It may act with RecF and RecO. This Polaromonas naphthalenivorans (strain CJ2) protein is Recombination protein RecR.